Reading from the N-terminus, the 261-residue chain is Cytochrome c oxidase subunit 3 (261 aa).

At 1–15 (MTHQTHAYHMVNPSP) the chain is on the mitochondrial matrix side. A helical membrane pass occupies residues 16–34 (WPLTGALSALLMTSGLIMW). The Mitochondrial intermembrane segment spans residues 35-40 (FHFNST). The helical transmembrane segment at 41–66 (TLLMLGLTTNMLTMYQWWRDVVREST) threads the bilayer. Topologically, residues 67–72 (FQGHHT) are mitochondrial matrix. Residues 73–105 (PNVQKGLRYGMILFIISEVLFFTGFFWAFYHSS) traverse the membrane as a helical segment. Residues 106-128 (LAPTPELGGCWPPTGINPLNPLE) are Mitochondrial intermembrane-facing. The chain crosses the membrane as a helical span at residues 129 to 152 (VPLLNTSVLLASGVSITWAHHSLM). The Mitochondrial matrix segment spans residues 153–155 (EGN). The helical transmembrane segment at 156-183 (RNHMLQALFITIALGVYFTLLQASEYYE) threads the bilayer. The Mitochondrial intermembrane portion of the chain corresponds to 184–190 (APFTISD). A helical membrane pass occupies residues 191 to 223 (GVYGSTFFVATGFHGLHVIIGSTFLIVCFFRQL). The Mitochondrial matrix segment spans residues 224–232 (KFHFTSNHH). Residues 233-256 (FGFEAAAWYWHFVDVVWLFLYVSI) traverse the membrane as a helical segment. Topologically, residues 257–261 (YWWGS) are mitochondrial intermembrane.

It belongs to the cytochrome c oxidase subunit 3 family. In terms of assembly, component of the cytochrome c oxidase (complex IV, CIV), a multisubunit enzyme composed of 14 subunits. The complex is composed of a catalytic core of 3 subunits MT-CO1, MT-CO2 and MT-CO3, encoded in the mitochondrial DNA, and 11 supernumerary subunits COX4I, COX5A, COX5B, COX6A, COX6B, COX6C, COX7A, COX7B, COX7C, COX8 and NDUFA4, which are encoded in the nuclear genome. The complex exists as a monomer or a dimer and forms supercomplexes (SCs) in the inner mitochondrial membrane with NADH-ubiquinone oxidoreductase (complex I, CI) and ubiquinol-cytochrome c oxidoreductase (cytochrome b-c1 complex, complex III, CIII), resulting in different assemblies (supercomplex SCI(1)III(2)IV(1) and megacomplex MCI(2)III(2)IV(2)).

Its subcellular location is the mitochondrion inner membrane. The enzyme catalyses 4 Fe(II)-[cytochrome c] + O2 + 8 H(+)(in) = 4 Fe(III)-[cytochrome c] + 2 H2O + 4 H(+)(out). Component of the cytochrome c oxidase, the last enzyme in the mitochondrial electron transport chain which drives oxidative phosphorylation. The respiratory chain contains 3 multisubunit complexes succinate dehydrogenase (complex II, CII), ubiquinol-cytochrome c oxidoreductase (cytochrome b-c1 complex, complex III, CIII) and cytochrome c oxidase (complex IV, CIV), that cooperate to transfer electrons derived from NADH and succinate to molecular oxygen, creating an electrochemical gradient over the inner membrane that drives transmembrane transport and the ATP synthase. Cytochrome c oxidase is the component of the respiratory chain that catalyzes the reduction of oxygen to water. Electrons originating from reduced cytochrome c in the intermembrane space (IMS) are transferred via the dinuclear copper A center (CU(A)) of subunit 2 and heme A of subunit 1 to the active site in subunit 1, a binuclear center (BNC) formed by heme A3 and copper B (CU(B)). The BNC reduces molecular oxygen to 2 water molecules using 4 electrons from cytochrome c in the IMS and 4 protons from the mitochondrial matrix. This is Cytochrome c oxidase subunit 3 (MT-CO3) from Gazella leptoceros (Sand gazelle).